The chain runs to 260 residues: Small ribosomal subunit protein uS2 (260 aa).

The disordered stretch occupies residues 225 to 260 (KGQTQTEAAPNAQAAPEAAAPAEQPAEEAAAASSEG). The segment covering 231–260 (EAAPNAQAAPEAAAPAEQPAEEAAAASSEG) has biased composition (low complexity).

Belongs to the universal ribosomal protein uS2 family.

In Rhodopirellula baltica (strain DSM 10527 / NCIMB 13988 / SH1), this protein is Small ribosomal subunit protein uS2.